The chain runs to 259 residues: 5'-nucleotidase SurE (259 aa).

A divalent metal cation is bound by residues aspartate 11, aspartate 12, serine 42, and asparagine 99.

This sequence belongs to the SurE nucleotidase family. It depends on a divalent metal cation as a cofactor.

It is found in the cytoplasm. The enzyme catalyses a ribonucleoside 5'-phosphate + H2O = a ribonucleoside + phosphate. Nucleotidase that shows phosphatase activity on nucleoside 5'-monophosphates. This Cytophaga hutchinsonii (strain ATCC 33406 / DSM 1761 / CIP 103989 / NBRC 15051 / NCIMB 9469 / D465) protein is 5'-nucleotidase SurE.